A 496-amino-acid chain; its full sequence is Trimethylamine methyltransferase MttB (496 aa).

Position 331 (O331) is a non-standard amino acid, pyrrolysine.

This sequence belongs to the trimethylamine methyltransferase family.

It catalyses the reaction Co(I)-[trimethylamine-specific corrinoid protein] + trimethylamine + H(+) = methyl-Co(III)-[trimethylamine-specific corrinoid protein] + dimethylamine. Functionally, catalyzes the transfer of a methyl group from trimethylamine to the corrinoid cofactor of MttC. In Desulfitobacterium hafniense (strain DSM 10664 / DCB-2), this protein is Trimethylamine methyltransferase MttB.